Here is a 101-residue protein sequence, read N- to C-terminus: Glutenin, high molecular weight subunit PC256 (101 aa).

Polar residues predominate over residues 1-27; it reads EKLGQGQQPRQWLQPRQGQQGYYPTSP. The interval 1–65 is disordered; the sequence is EKLGQGQQPR…QGYDSPYHVS (65 aa). Positions 41-62 are enriched in low complexity; sequence QGYYPTSPQQSGQGQQGYDSPY.

This sequence belongs to the gliadin/glutenin family. As to quaternary structure, disulfide-bridge linked aggregates.

Its function is as follows. Glutenins are high-molecular weight seed storage proteins of wheat endosperm. Thought to be responsible for the visco-elastic property of wheat dough. This is Glutenin, high molecular weight subunit PC256 from Triticum aestivum (Wheat).